Consider the following 75-residue polypeptide: Translational regulator CsrA (75 aa).

It belongs to the CsrA/RsmA family. In terms of assembly, homodimer; the beta-strands of each monomer intercalate to form a hydrophobic core, while the alpha-helices form wings that extend away from the core.

The protein localises to the cytoplasm. A translational regulator that binds mRNA to regulate translation initiation and/or mRNA stability. Usually binds in the 5'-UTR at or near the Shine-Dalgarno sequence preventing ribosome-binding, thus repressing translation. Its main target seems to be the major flagellin gene, while its function is anatagonized by FliW. In Thermosipho melanesiensis (strain DSM 12029 / CIP 104789 / BI429), this protein is Translational regulator CsrA.